Consider the following 188-residue polypeptide: Adenylate kinase (188 aa).

ATP is bound at residue 12–17 (GVGKGT). The tract at residues 32 to 61 (STGDIFRSAMANHTELGDKAKSFMDAGNLV) is NMP. AMP is bound by residues threonine 33, arginine 38, 59–61 (NLV), 89–92 (GYPR), and glutamine 96. The tract at residues 130 to 136 (GRGREDD) is LID. Position 131 (arginine 131) interacts with ATP. AMP-binding residues include arginine 133 and arginine 144. Glycine 172 contacts ATP.

This sequence belongs to the adenylate kinase family. In terms of assembly, monomer.

It is found in the cytoplasm. The enzyme catalyses AMP + ATP = 2 ADP. It functions in the pathway purine metabolism; AMP biosynthesis via salvage pathway; AMP from ADP: step 1/1. Catalyzes the reversible transfer of the terminal phosphate group between ATP and AMP. Plays an important role in cellular energy homeostasis and in adenine nucleotide metabolism. This chain is Adenylate kinase, found in Oenococcus oeni (strain ATCC BAA-331 / PSU-1).